The chain runs to 861 residues: Xylan 1,4-beta-xylosidase (861 aa).

A signal peptide spans 1–19 (MKYQLFLSLALCVGLGASA). The active-site Nucleophile is the aspartate 269. Residues 458-600 (DGKKGLKGTF…DYQETIAQLK (143 aa)) enclose the PA14 domain. The active-site Proton donor/acceptor is the glutamate 616.

The protein belongs to the glycosyl hydrolase 3 family. Exists as a large polymeric species, presumably as a homononamer.

It carries out the reaction Hydrolysis of (1-&gt;4)-beta-D-xylans, to remove successive D-xylose residues from the non-reducing termini.. The enzyme catalyses Hydrolysis of terminal non-reducing alpha-L-arabinofuranoside residues in alpha-L-arabinosides.. Its pathway is glycan degradation; xylan degradation. Its function is as follows. Involved in degradation of plant cell wall polysaccharides. Has beta-xylosidase activity via its capacity to hydrolyze glycosidic linkages of beta-1,4-xylo-oligosaccharides of various lengths (X2 to X6), releasing xylose monomers. To a much lesser extent, also has alpha-L-arabinofuranosidase activity. Does not possess beta-D-glucosidase activity. Acts synergistically with Xyn10D-Fae1A to increase the release of xylose from xylan. The sequence is that of Xylan 1,4-beta-xylosidase from Xylanibacter ruminicola (strain ATCC 19189 / DSM 19721 / CIP 105475 / JCM 8958 / 23) (Prevotella ruminicola).